The primary structure comprises 284 residues: TnP I resolvase (284 aa).

A Core-binding (CB) domain is found at 1 to 84 (MDVAKQFSSY…SLAKFNEFLI (84 aa)). The Tyr recombinase domain occupies 107–282 (ASPTQIVELD…NQLQLKNKME (176 aa)). Active-site residues include arginine 145, lysine 170, histidine 234, arginine 237, and histidine 260. The active-site O-(3'-phospho-DNA)-tyrosine intermediate is tyrosine 269.

The protein belongs to the 'phage' integrase family.

Resolvase catalyzes the resolution (a site-specific recombination) of the cointegrated replicon to yield the final transposition products. The polypeptide is TnP I resolvase (tnpI) (Bacillus thuringiensis).